The following is a 130-amino-acid chain: Putative protein ZNF815 (130 aa).

The protein is Putative protein ZNF815 (ZNF815P) of Homo sapiens (Human).